The chain runs to 478 residues: PRAME family member 26 (478 aa).

One copy of the LRR 1; degenerate repeat lies at Arg99 to Cys126. An LRR 2; degenerate repeat occupies His181–Asn205. The stretch at Leu206–His232 is one LRR 3; degenerate repeat. The stretch at Met233 to Lys268 is one LRR 4; degenerate repeat. LRR repeat units follow at residues Leu269–Leu294, Lys295–Lys326, Thr327–Leu347, Ala351–Arg378, and Cys379–His403.

Belongs to the PRAME family.

The protein is PRAME family member 26 of Homo sapiens (Human).